Consider the following 400-residue polypeptide: tRNA(Met) cytidine acetate ligase (400 aa).

ATP-binding positions include 7-20 (IVEY…HLYH), glycine 101, asparagine 159, and arginine 184.

Belongs to the TmcAL family.

It is found in the cytoplasm. It catalyses the reaction cytidine(34) in elongator tRNA(Met) + acetate + ATP = N(4)-acetylcytidine(34) in elongator tRNA(Met) + AMP + diphosphate. Catalyzes the formation of N(4)-acetylcytidine (ac(4)C) at the wobble position of elongator tRNA(Met), using acetate and ATP as substrates. First activates an acetate ion to form acetyladenylate (Ac-AMP) and then transfers the acetyl group to tRNA to form ac(4)C34. This chain is tRNA(Met) cytidine acetate ligase, found in Caldicellulosiruptor saccharolyticus (strain ATCC 43494 / DSM 8903 / Tp8T 6331).